The primary structure comprises 543 residues: Hydroxylamine reductase (543 aa).

4 residues coordinate [4Fe-4S] cluster: cysteine 5, cysteine 8, cysteine 17, and cysteine 23. Residues histidine 236, glutamate 260, cysteine 304, cysteine 398, cysteine 426, cysteine 451, glutamate 486, and lysine 488 each coordinate hybrid [4Fe-2O-2S] cluster. Cysteine 398 carries the post-translational modification Cysteine persulfide.

It belongs to the HCP family. Requires [4Fe-4S] cluster as cofactor. It depends on hybrid [4Fe-2O-2S] cluster as a cofactor.

The protein resides in the cytoplasm. The catalysed reaction is A + NH4(+) + H2O = hydroxylamine + AH2 + H(+). Catalyzes the reduction of hydroxylamine to form NH(3) and H(2)O. The sequence is that of Hydroxylamine reductase from Bacteroides fragilis (strain ATCC 25285 / DSM 2151 / CCUG 4856 / JCM 11019 / LMG 10263 / NCTC 9343 / Onslow / VPI 2553 / EN-2).